The chain runs to 155 residues: MPIDGYSSLTQLGRQAGVPANPDEAVIETFANPHPGTNYTVRLTAPELTTICPITGQPDFATLIVDYVPRDRLVESKSFKLFLGSFRNLGTFHEDCTAYIHKRLSDALDAAFLRVVGLWNARGGITIDCVVQTGELPSNCALLPLGRTDYRTGRI.

Residue cysteine 52 is the Thioimide intermediate of the active site. Aspartate 59 serves as the catalytic Proton donor. Residues 74–76 (VES) and 93–94 (HE) contribute to the substrate site.

Belongs to the GTP cyclohydrolase I family. QueF type 1 subfamily.

Its subcellular location is the cytoplasm. It catalyses the reaction 7-aminomethyl-7-carbaguanine + 2 NADP(+) = 7-cyano-7-deazaguanine + 2 NADPH + 3 H(+). It functions in the pathway tRNA modification; tRNA-queuosine biosynthesis. Functionally, catalyzes the NADPH-dependent reduction of 7-cyano-7-deazaguanine (preQ0) to 7-aminomethyl-7-deazaguanine (preQ1). This chain is NADPH-dependent 7-cyano-7-deazaguanine reductase, found in Syntrophobacter fumaroxidans (strain DSM 10017 / MPOB).